The sequence spans 614 residues: MSNLHSSLNGSASNLPDGSGRSFTASYSGQSGAPSPSFHHTGNLQGLHNIHGNYNVGNMQGTLTSRNSSMNSIPSAGVQQPNGSFSSGRFASNNLPVNLSQLSHGSSHGHSGIPNRGLNVVGNPGFSSNANGVGGSIPGILSTSAGLSNRNSVPGMGISQLLGNSGPRITNSMGNMVGGGNLGRNISSGGLSIPGLSSRLNLAANSGSGLNVQGQNRMMGGVLPQGSQVMSMLGNSYHTGGGPLSQNHVQSVNNMMLSDHPNDSSLFDINNDFPQLTSRPGSAGGTQGHLGSLRKQGLGVPLVQQNQEFSIQNEDFPALPGYKGGNSEYPMDLHQKEQLHDNAMSMMHSQNFSMGRSGGFNLGATYSSHRPQQQPQHTSSTGGLQGLGLRPLSSPNAVSSIGYDQLIQQYQQHQNQSQFPVQQMSSINQFRDSEMKSTQSEADPFCLLGLLDVLNRSNPELTSLALGIDLTTLGLDLNSTGNLYKTFASPWTNEPAKSEVEFTVPNCYYATEPPPLTRASFKRFSYELLFYTFYSMPKDEAQLYAADELYERGWFYHKELRVWFFRVGEPLVRAATYERGTYEYLDPNSFKTVRKEHFVIKYELMEKRPSLLQL.

Disordered regions lie at residues 1–46, 58–89, and 361–391; these read MSNL…NLQG, NMQG…SSGR, and NLGA…GLRP. The span at 364–381 shows a compositional bias: polar residues; it reads ATYSSHRPQQQPQHTSST.

This sequence belongs to the CNOT2/3/5 family. As to quaternary structure, interacts with Agrobacterium tumefaciens VirE2. Binds to VIP1. Forms a complex made of Agrobacterium VirE2, VIP1, VIP2 and single-stranded DNA (ssDNA).

It localises to the nucleus. Functionally, transcriptional regulator required for Agrobacterium-mediated stable genetic transformation by T-DNA integration in host genome, but not for T-DNA transient expression. In Arabidopsis thaliana (Mouse-ear cress), this protein is Probable NOT transcription complex subunit VIP2 (VIP2).